We begin with the raw amino-acid sequence, 277 residues long: Large ribosomal subunit protein uL2cz/uL2cy (277 aa).

2 disordered regions span residues 1–31 (MAIH…NTRK) and 227–277 (NPVD…RRSK).

The protein belongs to the universal ribosomal protein uL2 family. Part of the 50S ribosomal subunit.

It localises to the plastid. The protein resides in the chloroplast. The sequence is that of Large ribosomal subunit protein uL2cz/uL2cy (rpl2-A) from Manihot esculenta (Cassava).